Here is a 315-residue protein sequence, read N- to C-terminus: Acetyl-coenzyme A carboxylase carboxyl transferase subunit alpha (315 aa).

The 254-residue stretch at 40-293 (LQDKSKTLTE…RAELSSQLAM (254 aa)) folds into the CoA carboxyltransferase C-terminal domain.

The protein belongs to the AccA family. As to quaternary structure, acetyl-CoA carboxylase is a heterohexamer composed of biotin carboxyl carrier protein (AccB), biotin carboxylase (AccC) and two subunits each of ACCase subunit alpha (AccA) and ACCase subunit beta (AccD).

The protein resides in the cytoplasm. It catalyses the reaction N(6)-carboxybiotinyl-L-lysyl-[protein] + acetyl-CoA = N(6)-biotinyl-L-lysyl-[protein] + malonyl-CoA. Its pathway is lipid metabolism; malonyl-CoA biosynthesis; malonyl-CoA from acetyl-CoA: step 1/1. Its function is as follows. Component of the acetyl coenzyme A carboxylase (ACC) complex. First, biotin carboxylase catalyzes the carboxylation of biotin on its carrier protein (BCCP) and then the CO(2) group is transferred by the carboxyltransferase to acetyl-CoA to form malonyl-CoA. The chain is Acetyl-coenzyme A carboxylase carboxyl transferase subunit alpha from Pseudomonas fluorescens (strain Pf0-1).